Consider the following 82-residue polypeptide: Cytochrome b-c1 complex subunit 8 (82 aa).

The Mitochondrial matrix segment spans residues 1–39 (MGREFGNLTRMRHVISYSLSPFEQRAHPHVFTKGIPNVL). At S16 the chain carries Phosphoserine. An N6-acetyllysine; alternate modification is found at K33. K33 bears the N6-succinyllysine; alternate mark. Residues 40-68 (RRFRESFFRVAPQFVVFYLIYTWGTEEFE) traverse the membrane as a helical segment. At 69–82 (RSKRKNPAAYENDK) the chain is on the mitochondrial intermembrane side.

It belongs to the UQCRQ/QCR8 family. Component of the ubiquinol-cytochrome c oxidoreductase (cytochrome b-c1 complex, complex III, CIII), a multisubunit enzyme composed of 11 subunits. The complex is composed of 3 respiratory subunits cytochrome b, cytochrome c1 and Rieske protein UQCRFS1, 2 core protein subunits UQCRC1/QCR1 and UQCRC2/QCR2, and 6 low-molecular weight protein subunits UQCRH/QCR6, UQCRB/QCR7, UQCRQ/QCR8, UQCR10/QCR9, UQCR11/QCR10 and subunit 9, the cleavage product of Rieske protein UQCRFS1. The complex exists as an obligatory dimer and forms supercomplexes (SCs) in the inner mitochondrial membrane with NADH-ubiquinone oxidoreductase (complex I, CI) and cytochrome c oxidase (complex IV, CIV), resulting in different assemblies (supercomplex SCI(1)III(2)IV(1) and megacomplex MCI(2)III(2)IV(2)). Interacts with UQCC6.

Its subcellular location is the mitochondrion inner membrane. Component of the ubiquinol-cytochrome c oxidoreductase, a multisubunit transmembrane complex that is part of the mitochondrial electron transport chain which drives oxidative phosphorylation. The respiratory chain contains 3 multisubunit complexes succinate dehydrogenase (complex II, CII), ubiquinol-cytochrome c oxidoreductase (cytochrome b-c1 complex, complex III, CIII) and cytochrome c oxidase (complex IV, CIV), that cooperate to transfer electrons derived from NADH and succinate to molecular oxygen, creating an electrochemical gradient over the inner membrane that drives transmembrane transport and the ATP synthase. The cytochrome b-c1 complex catalyzes electron transfer from ubiquinol to cytochrome c, linking this redox reaction to translocation of protons across the mitochondrial inner membrane, with protons being carried across the membrane as hydrogens on the quinol. In the process called Q cycle, 2 protons are consumed from the matrix, 4 protons are released into the intermembrane space and 2 electrons are passed to cytochrome c. In Pongo abelii (Sumatran orangutan), this protein is Cytochrome b-c1 complex subunit 8 (UQCRQ).